Here is a 207-residue protein sequence, read N- to C-terminus: Outer-membrane lipoprotein LolB (207 aa).

The first 23 residues, 1–23 (MPTMNRSRRLALLCLGAPLLLAA), serve as a signal peptide directing secretion. Cysteine 24 carries the N-palmitoyl cysteine lipid modification. Cysteine 24 carries S-diacylglycerol cysteine lipidation. The segment at 171–207 (PSASQAPAPRPRRIDLEREGGPTPLAVKLVIDPEEAP) is disordered.

Belongs to the LolB family. As to quaternary structure, monomer.

The protein resides in the cell outer membrane. Plays a critical role in the incorporation of lipoproteins in the outer membrane after they are released by the LolA protein. In Cupriavidus pinatubonensis (strain JMP 134 / LMG 1197) (Cupriavidus necator (strain JMP 134)), this protein is Outer-membrane lipoprotein LolB.